The following is a 197-amino-acid chain: DnaJ homolog subfamily C member 5 (197 aa).

The region spanning 13–82 (GESLYHVLGL…RNIYDKYGSL (70 aa)) is the J domain. The tract at residues 153 to 197 (EDLEAQMQSDERDTEGPVLVQPASATETTQLTSDSHASYHTDGFN) is disordered. A compositionally biased stretch (polar residues) spans 175–197 (ASATETTQLTSDSHASYHTDGFN).

Post-translationally, palmitoylated. Palmitoylation occurs probably in the cysteine-rich domain and regulates DNAJC5 stable membrane attachment.

The protein localises to the cytoplasm. The protein resides in the cytosol. Its subcellular location is the membrane. It is found in the cytoplasmic vesicle. It localises to the secretory vesicle. The protein localises to the chromaffin granule membrane. The protein resides in the melanosome. Its subcellular location is the cell membrane. Its function is as follows. May have an important role in presynaptic function. May be involved in calcium-dependent neurotransmitter release at nerve endings. The sequence is that of DnaJ homolog subfamily C member 5 from Xenopus laevis (African clawed frog).